The following is a 322-amino-acid chain: Phosphatidylserine decarboxylase proenzyme (322 aa).

Catalysis depends on charge relay system; for autoendoproteolytic cleavage activity residues Asp90, His147, and Ser254. Catalysis depends on Ser254, which acts as the Schiff-base intermediate with substrate; via pyruvic acid; for decarboxylase activity. Ser254 carries the post-translational modification Pyruvic acid (Ser); by autocatalysis. Residues 295–322 (VEPAPLPTEEIKAEHDASPLVDNKKDDT) are disordered. Positions 303–322 (EEIKAEHDASPLVDNKKDDT) are enriched in basic and acidic residues.

Belongs to the phosphatidylserine decarboxylase family. PSD-B subfamily. Prokaryotic type I sub-subfamily. As to quaternary structure, heterodimer of a large membrane-associated beta subunit and a small pyruvoyl-containing alpha subunit. Pyruvate is required as a cofactor. Post-translationally, is synthesized initially as an inactive proenzyme. Formation of the active enzyme involves a self-maturation process in which the active site pyruvoyl group is generated from an internal serine residue via an autocatalytic post-translational modification. Two non-identical subunits are generated from the proenzyme in this reaction, and the pyruvate is formed at the N-terminus of the alpha chain, which is derived from the carboxyl end of the proenzyme. The autoendoproteolytic cleavage occurs by a canonical serine protease mechanism, in which the side chain hydroxyl group of the serine supplies its oxygen atom to form the C-terminus of the beta chain, while the remainder of the serine residue undergoes an oxidative deamination to produce ammonia and the pyruvoyl prosthetic group on the alpha chain. During this reaction, the Ser that is part of the protease active site of the proenzyme becomes the pyruvoyl prosthetic group, which constitutes an essential element of the active site of the mature decarboxylase.

It localises to the cell membrane. It carries out the reaction a 1,2-diacyl-sn-glycero-3-phospho-L-serine + H(+) = a 1,2-diacyl-sn-glycero-3-phosphoethanolamine + CO2. Its pathway is phospholipid metabolism; phosphatidylethanolamine biosynthesis; phosphatidylethanolamine from CDP-diacylglycerol: step 2/2. Catalyzes the formation of phosphatidylethanolamine (PtdEtn) from phosphatidylserine (PtdSer). This Salmonella agona (strain SL483) protein is Phosphatidylserine decarboxylase proenzyme.